Reading from the N-terminus, the 97-residue chain is Large ribosomal subunit protein eL21 (97 aa).

A disordered region spans residues 1 to 23 (MTKMSKGPRSGSRRVMTKSVKNK).

This sequence belongs to the eukaryotic ribosomal protein eL21 family.

The protein is Large ribosomal subunit protein eL21 of Picrophilus torridus (strain ATCC 700027 / DSM 9790 / JCM 10055 / NBRC 100828 / KAW 2/3).